We begin with the raw amino-acid sequence, 367 residues long: BTB/POZ domain-containing protein Tiwaz (367 aa).

Disordered stretches follow at residues 16-46 and 62-87; these read LTVDSSCPKRKKCDMDRERERDVKALEPRDL and SSPTVSPTISNSSSPTPTPPASSSVT. The span at 28 to 45 shows a compositional bias: basic and acidic residues; the sequence is CDMDRERERDVKALEPRD. Residues 135 to 205 enclose the BTB domain; the sequence is APVHIDVGGT…MRNSRLLIAE (71 aa). Residues 240–261 form a disordered region; that stretch reads GNYLVAPPTPPARHIKTSPRTS.

Functions with the transcription factor TfAP-2 to regulate octopamine neuronal signaling pathways that control behaviors such as male aggression, male mating, and the initiation of feeding. Required for TfAP-2 transcriptional activity in octopaminergic neurons. Functions with TfAP-2 to regulate expression of genes which are involved in promoting octopamine production and secretion from octopaminergic neurons, such as Tbh and Vmat. Octopamine then modulates feeding and male aggression by regulating the expression of the satiation hormone Dsk in insulin-producing cells (IPCs). Functions with octopamine and Dsk as part of a negative feedback loop to prevent overeating; acts with TfAP-2 to regulate octopamine signaling pathways that initiate feeding, then octopamine activates expression of Dsk which inhibits consummatory behavior. May also be involved in negatively regulating nociception in larvae to prevent spontaneous pain and hyperalgesia. The chain is BTB/POZ domain-containing protein Tiwaz from Drosophila melanogaster (Fruit fly).